Here is a 79-residue protein sequence, read N- to C-terminus: Small ribosomal subunit protein uS17 (79 aa).

It belongs to the universal ribosomal protein uS17 family. As to quaternary structure, part of the 30S ribosomal subunit.

In terms of biological role, one of the primary rRNA binding proteins, it binds specifically to the 5'-end of 16S ribosomal RNA. In Rhizobium leguminosarum bv. trifolii (strain WSM2304), this protein is Small ribosomal subunit protein uS17.